Consider the following 225-residue polypeptide: Ribonuclease T (225 aa).

Positions 1-21 (MSEDHFDDEHEGHGGGGGSRH) are disordered. An Exonuclease domain is found at 33-207 (VVVDVETGGF…YDTEKTAELF (175 aa)). The Mg(2+) site is built by aspartate 36, glutamate 38, histidine 194, and aspartate 199. Histidine 194 functions as the Proton donor/acceptor in the catalytic mechanism.

Belongs to the RNase T family. In terms of assembly, homodimer. It depends on Mg(2+) as a cofactor.

Trims short 3' overhangs of a variety of RNA species, leaving a one or two nucleotide 3' overhang. Responsible for the end-turnover of tRNA: specifically removes the terminal AMP residue from uncharged tRNA (tRNA-C-C-A). Also appears to be involved in tRNA biosynthesis. This is Ribonuclease T from Pseudomonas syringae pv. syringae (strain B728a).